A 274-amino-acid chain; its full sequence is 2-amino-4,5-dihydroxy-6-oxo-7-(phosphonooxy)heptanoate synthase (274 aa).

Belongs to the DeoC/FbaB aldolase family. GriI subfamily. Homodecamer.

The enzyme catalyses 2-amino-4,5-dihydroxy-6-oxo-7-(phosphooxy)heptanoate = L-aspartate 4-semialdehyde + dihydroxyacetone phosphate. In terms of biological role, catalyzes aldol condensation between L-aspartate-4-semialdehyde (ASA) and dihydroxyacetone phosphate (DHAP), to form 2-amino-4,5-dihydroxy-6-oxo-7-(phosphonooxy)heptanoate. The protein is 2-amino-4,5-dihydroxy-6-oxo-7-(phosphonooxy)heptanoate synthase (griI) of Streptomyces griseus subsp. griseus (strain JCM 4626 / CBS 651.72 / NBRC 13350 / KCC S-0626 / ISP 5235).